A 459-amino-acid polypeptide reads, in one-letter code: Ribulose bisphosphate carboxylase large chain (459 aa).

The residue at position 4 (Lys-4) is an N6,N6,N6-trimethyllysine. Substrate is bound by residues Asn-113 and Thr-163. The active-site Proton acceptor is the Lys-165. Lys-167 lines the substrate pocket. Mg(2+) is bound by residues Lys-191, Asp-193, and Glu-194. Lys-191 bears the N6-carboxylysine mark. Catalysis depends on His-284, which acts as the Proton acceptor. Residues Arg-285, His-317, and Ser-369 each coordinate substrate.

It belongs to the RuBisCO large chain family. Type I subfamily. As to quaternary structure, heterohexadecamer of 8 large chains and 8 small chains; disulfide-linked. The disulfide link is formed within the large subunit homodimers. Mg(2+) serves as cofactor. The disulfide bond which can form in the large chain dimeric partners within the hexadecamer appears to be associated with oxidative stress and protein turnover.

Its subcellular location is the plastid. The protein localises to the chloroplast. It carries out the reaction 2 (2R)-3-phosphoglycerate + 2 H(+) = D-ribulose 1,5-bisphosphate + CO2 + H2O. The enzyme catalyses D-ribulose 1,5-bisphosphate + O2 = 2-phosphoglycolate + (2R)-3-phosphoglycerate + 2 H(+). RuBisCO catalyzes two reactions: the carboxylation of D-ribulose 1,5-bisphosphate, the primary event in carbon dioxide fixation, as well as the oxidative fragmentation of the pentose substrate in the photorespiration process. Both reactions occur simultaneously and in competition at the same active site. This chain is Ribulose bisphosphate carboxylase large chain, found in Roridula gorgonias (South African fly bush).